The following is a 707-amino-acid chain: DNA-binding protein RFX2 (707 aa).

Serine 33 carries the post-translational modification Phosphoserine. A DNA-binding region (RFX-type winged-helix) is located at residues 204–279 (HLQWLLDNYE…YHYYGIRLKP (76 aa)). Residues 297–337 (QQPVHQKPRYRPAQKTDSLGESGSHSSLHSTPEQAMAAQSQ) form a disordered region. A compositionally biased stretch (low complexity) spans 315–337 (LGESGSHSSLHSTPEQAMAAQSQ). The residue at position 420 (serine 420) is a Phosphoserine.

Belongs to the RFX family. In terms of assembly, homodimer; probably only forms homodimers in testis. Heterodimer; heterodimerizes with RFX1 and RFX3.

Its subcellular location is the nucleus. The protein resides in the cytoplasm. Its function is as follows. Transcription factor that acts as a key regulator of spermatogenesis. Acts by regulating expression of genes required for the haploid phase during spermiogenesis, such as genes required for cilium assembly and function. Recognizes and binds the X-box, a regulatory motif with DNA sequence 5'-GTNRCC(0-3N)RGYAAC-3' present on promoters. Probably activates transcription of the testis-specific histone gene H1-6. The polypeptide is DNA-binding protein RFX2 (RFX2) (Bos taurus (Bovine)).